The following is a 998-amino-acid chain: Protein Smaug (998 aa).

Residues 1 to 37 (MKYATGTDNAMTSGISGQTNNSNSASNEMQPTTSTPT) are compositionally biased toward polar residues. 3 disordered regions span residues 1–45 (MKYA…EATS), 50–69 (TATY…QSQP), and 329–370 (LCPA…GSSS). Residues 329-338 (LCPASGSRSS) show a composition bias toward low complexity. Phosphoserine occurs at positions 564 and 575. The interval 583 to 763 (EFKPNYIKFH…KDLKFKLSKM (181 aa)) is interaction with cup. Residues 600–654 (GIGLWLKSLRLHKYIELFKNMTYEEMLLITEDFLQSVGVTKGASHKLALCIDKLK) enclose the SAM domain. 2 disordered regions span residues 773–892 (HVKP…MQQM) and 942–977 (NNGS…QQPK). Composition is skewed to polar residues over residues 801–822 (KSGS…NFSL) and 854–864 (HQPQYKSSSYP). S971 is modified (phosphoserine).

It belongs to the SMAUG family. As to quaternary structure, interacts with oskar (osk). Binds to the 3'-UTR of nos. Interacts with cup, which in turn recruits eIF4-E, leading to an indirect interaction between smg and eIF4-E that prevents mRNA translation.

Its subcellular location is the cytoplasm. In terms of biological role, translation regulator that binds to the 3'-UTR of specific mRNAs such as nanos (nos) and prevent their translation. Prevents translation of unlocalized nos in the bulk cytoplasm via the recruitment of cup. This chain is Protein Smaug, found in Drosophila simulans (Fruit fly).